Consider the following 354-residue polypeptide: Mating-type protein MAT-1 (354 aa).

The segment at residues 60–117 is a DNA-binding region (alpha box); the sequence is KAKKALNAFVGFRCYYIAIPAFKQWPMKKLSNLISLLWDRDPNKSLWSLMAKAWSNIR.

The protein belongs to the MATALPHA1 family.

It is found in the nucleus. Mating type proteins are sequence specific DNA-binding proteins that act as master switches in fungal differentiation by controlling gene expression in a cell type-specific fashion. Transcriptional activator that induces the transcription of alpha-specific genes. The chain is Mating-type protein MAT-1 (MAT1) from Cochliobolus cymbopogonis (Curvularia cymbopogonis).